The chain runs to 259 residues: Undecaprenyl-diphosphatase 3 (259 aa).

The next 8 membrane-spanning stretches (helical) occupy residues 1-21, 39-59, 71-91, 99-119, 133-153, 174-194, 208-228, and 236-256; these read MNWL…FLPI, AGLF…FIYY, FSKL…IGLL, ISKT…FLYM, ITYK…FPAI, AYFS…LQFV, SLIV…SWMI, and LKVF…LQFT.

The protein belongs to the UppP family.

Its subcellular location is the cell membrane. It carries out the reaction di-trans,octa-cis-undecaprenyl diphosphate + H2O = di-trans,octa-cis-undecaprenyl phosphate + phosphate + H(+). Its function is as follows. Catalyzes the dephosphorylation of undecaprenyl diphosphate (UPP). Confers resistance to bacitracin. In Bacillus cereus (strain ATCC 10987 / NRS 248), this protein is Undecaprenyl-diphosphatase 3.